A 129-amino-acid chain; its full sequence is Cortical cell-delineating protein (129 aa).

The or 21 signal peptide spans 1-19 (MAPKVALFLALSLLFAATA). The N-linked (GlcNAc...) asparagine glycan is linked to Asn25. Tandem repeats lie at residues 29 to 34 (PVVPTP) and 35 to 40 (PVVPTP). A 2 X 6 AA tandem repeats of P-V-V-P-T-P region spans residues 29 to 40 (PVVPTPPVVPTP).

This sequence to carrot DC2.15 and PEMB3. In terms of tissue distribution, cortical ground meristem of developing roots.

Delineates a novel subset of developing cortical cells. It is probably involved in some aspect of transport of molecules to or from the vasculature. The sequence is that of Cortical cell-delineating protein from Zea mays (Maize).